Here is a 305-residue protein sequence, read N- to C-terminus: Methionyl-tRNA formyltransferase (305 aa).

111 to 114 provides a ligand contact to (6S)-5,6,7,8-tetrahydrofolate; it reads SLLP.

The protein belongs to the Fmt family.

It carries out the reaction L-methionyl-tRNA(fMet) + (6R)-10-formyltetrahydrofolate = N-formyl-L-methionyl-tRNA(fMet) + (6S)-5,6,7,8-tetrahydrofolate + H(+). Its function is as follows. Attaches a formyl group to the free amino group of methionyl-tRNA(fMet). The formyl group appears to play a dual role in the initiator identity of N-formylmethionyl-tRNA by promoting its recognition by IF2 and preventing the misappropriation of this tRNA by the elongation apparatus. The sequence is that of Methionyl-tRNA formyltransferase from Campylobacter jejuni subsp. doylei (strain ATCC BAA-1458 / RM4099 / 269.97).